Consider the following 519-residue polypeptide: Glutamate--cysteine ligase (519 aa).

The protein belongs to the glutamate--cysteine ligase type 1 family. Type 1 subfamily.

It catalyses the reaction L-cysteine + L-glutamate + ATP = gamma-L-glutamyl-L-cysteine + ADP + phosphate + H(+). It functions in the pathway sulfur metabolism; glutathione biosynthesis; glutathione from L-cysteine and L-glutamate: step 1/2. This is Glutamate--cysteine ligase from Photorhabdus laumondii subsp. laumondii (strain DSM 15139 / CIP 105565 / TT01) (Photorhabdus luminescens subsp. laumondii).